The chain runs to 249 residues: Exosome complex component Rrp41 (249 aa).

This sequence belongs to the RNase PH family. Rrp41 subfamily. Component of the archaeal exosome complex. Forms a hexameric ring-like arrangement composed of 3 Rrp41-Rrp42 heterodimers. The hexameric ring associates with a trimer of Rrp4 and/or Csl4 subunits.

The protein localises to the cytoplasm. Catalytic component of the exosome, which is a complex involved in RNA degradation. Has 3'-&gt;5' exoribonuclease activity. Can also synthesize heteromeric RNA-tails. In Thermococcus kodakarensis (strain ATCC BAA-918 / JCM 12380 / KOD1) (Pyrococcus kodakaraensis (strain KOD1)), this protein is Exosome complex component Rrp41.